We begin with the raw amino-acid sequence, 587 residues long: Succinate dehydrogenase flavoprotein subunit (587 aa).

Residues 15–20, 39–54, and Asp-223 contribute to the FAD site; these read GAGGAG and SKVF…AQGG. At His-47 the chain carries Tele-8alpha-FAD histidine. The substrate site is built by His-244 and Thr-256. Arg-288 (proton acceptor) is an active-site residue. His-355 lines the substrate pocket. Glu-389 is an FAD binding site. Substrate is bound at residue Arg-400. 405 to 406 contacts FAD; sequence SL.

It belongs to the FAD-dependent oxidoreductase 2 family. FRD/SDH subfamily. Part of an enzyme complex containing four subunits: a flavoprotein, an iron-sulfur protein, cytochrome b-556 and a hydrophobic protein. It depends on FAD as a cofactor.

It is found in the cell inner membrane. It catalyses the reaction a quinone + succinate = fumarate + a quinol. It participates in carbohydrate metabolism; tricarboxylic acid cycle; fumarate from succinate (bacterial route): step 1/1. The polypeptide is Succinate dehydrogenase flavoprotein subunit (sdhA) (Coxiella burnetii (strain RSA 493 / Nine Mile phase I)).